A 299-amino-acid polypeptide reads, in one-letter code: Ficolin-3 (299 aa).

Positions 1 to 23 are cleaved as a signal peptide; sequence MDLLWILPSLWLLLLGGPACLKT. Residues 44–81 are disordered; that stretch reads PSCPGAPGSPGEKGAPGPQGPPGPPGKMGPKGEPGDPV. One can recognise a Collagen-like domain in the interval 48–80; it reads GAPGSPGEKGAPGPQGPPGPPGKMGPKGEPGDP. Hydroxyproline is present on residues Pro50, Pro53, Pro59, Pro65, Pro68, and Pro77. Over residues 61 to 70 the composition is skewed to pro residues; the sequence is PQGPPGPPGK. The region spanning 84–299 is the Fibrinogen C-terminal domain; it reads LRCQEGPRNC…PYRRVRMMLR (216 aa). 2 disulfides stabilise this stretch: Cys86–Cys110 and Cys93–Cys121. Asn189 carries N-linked (GlcNAc...) (complex) asparagine glycosylation. 4 residues coordinate Ca(2+): Asp237, Asp239, Ser241, and Ser243. A disulfide bridge connects residues Cys245 and Cys258. 258 to 259 is an a carbohydrate binding site; it reads CY.

The protein belongs to the ficolin lectin family. As to quaternary structure, homotrimer. May form an octadecamer consisting of an elementary trimer unit. Does not interact with fibronectin, elastin or zymosan. Interacts with MASP1 and MASP2. Post-translationally, the N-terminus is blocked. In terms of tissue distribution, liver and lung. In liver it is produced by bile duct epithelial cells and hepatocytes. In lung it is produced by both ciliated bronchial epithelial cells and type II alveolar epithelial cells.

The protein resides in the secreted. Its function is as follows. May function in innate immunity through activation of the lectin complement pathway. Calcium-dependent and GlcNAc-binding lectin. Has affinity with GalNAc, GlcNAc, D-fucose, as mono/oligosaccharide and lipopolysaccharides from S.typhimurium and S.minnesota. The protein is Ficolin-3 (FCN3) of Homo sapiens (Human).